Here is a 209-residue protein sequence, read N- to C-terminus: Thymidylate kinase (209 aa).

An ATP-binding site is contributed by 10 to 17 (GLEGAGKS).

It belongs to the thymidylate kinase family.

It catalyses the reaction dTMP + ATP = dTDP + ADP. Phosphorylation of dTMP to form dTDP in both de novo and salvage pathways of dTTP synthesis. This Photobacterium profundum (strain SS9) protein is Thymidylate kinase.